Consider the following 384-residue polypeptide: Actin-related protein 2/3 complex subunit 1 (384 aa).

5 WD repeats span residues 61–99 (DHDK…TYKP), 105–146 (RINR…WVSK), 151–190 (PIKS…LDSK), 212–251 (YQGS…QSVN), and 349–383 (AHEN…VIYT).

Belongs to the WD repeat ARPC1 family. As to quaternary structure, component of the Arp2/3 complex composed of ARP2, ARP3, ARC40/p41-ARC, ARC35/p34-ARC, ARC18/p21-ARC, ARC19/p20-ARC and ARC16/p16-ARC.

The protein resides in the cytoplasm. It is found in the cytoskeleton. Its subcellular location is the actin patch. Its function is as follows. Functions as a component of the Arp2/3 complex which is involved in regulation of actin polymerization and together with an activating nucleation-promoting factor (NPF) mediates the formation of branched actin networks. The chain is Actin-related protein 2/3 complex subunit 1 (ARC40) from Saccharomyces cerevisiae (strain ATCC 204508 / S288c) (Baker's yeast).